The chain runs to 242 residues: Probable transcriptional regulatory protein Bamb_2332 (242 aa).

Belongs to the TACO1 family.

It localises to the cytoplasm. The protein is Probable transcriptional regulatory protein Bamb_2332 of Burkholderia ambifaria (strain ATCC BAA-244 / DSM 16087 / CCUG 44356 / LMG 19182 / AMMD) (Burkholderia cepacia (strain AMMD)).